Consider the following 143-residue polypeptide: Transcription antitermination protein NusB (143 aa).

It belongs to the NusB family.

Functionally, involved in transcription antitermination. Required for transcription of ribosomal RNA (rRNA) genes. Binds specifically to the boxA antiterminator sequence of the ribosomal RNA (rrn) operons. The sequence is that of Transcription antitermination protein NusB from Buchnera aphidicola subsp. Acyrthosiphon pisum (strain 5A).